The chain runs to 115 residues: Large ribosomal subunit protein bL19 (115 aa).

Belongs to the bacterial ribosomal protein bL19 family.

This protein is located at the 30S-50S ribosomal subunit interface and may play a role in the structure and function of the aminoacyl-tRNA binding site. The chain is Large ribosomal subunit protein bL19 from Oleidesulfovibrio alaskensis (strain ATCC BAA-1058 / DSM 17464 / G20) (Desulfovibrio alaskensis).